The chain runs to 525 residues: Cytochrome P450 4V2 (525 aa).

Residues 13 to 33 (LLLWGAASAVSLAGASLVLSL) traverse the membrane as a helical segment. The heme site is built by E329 and C467.

It belongs to the cytochrome P450 family. It depends on heme as a cofactor.

It is found in the endoplasmic reticulum membrane. It catalyses the reaction dodecanoate + reduced [NADPH--hemoprotein reductase] + O2 = 12-hydroxydodecanoate + oxidized [NADPH--hemoprotein reductase] + H2O + H(+). It carries out the reaction tetradecanoate + reduced [NADPH--hemoprotein reductase] + O2 = 14-hydroxytetradecanoate + oxidized [NADPH--hemoprotein reductase] + H2O + H(+). The catalysed reaction is hexadecanoate + reduced [NADPH--hemoprotein reductase] + O2 = 16-hydroxyhexadecanoate + oxidized [NADPH--hemoprotein reductase] + H2O + H(+). The enzyme catalyses (5Z,8Z,11Z,14Z,17Z)-eicosapentaenoate + reduced [NADPH--hemoprotein reductase] + O2 = 20-hydroxy-(5Z,8Z,11Z,14Z,17Z)-eicosapentaenoate + oxidized [NADPH--hemoprotein reductase] + H2O + H(+). It catalyses the reaction (4Z,7Z,10Z,13Z,16Z,19Z)-docosahexaenoate + reduced [NADPH--hemoprotein reductase] + O2 = 22-hydroxy-(4Z,7Z,10Z,13Z,16Z,19Z)-docosahexaenoate + oxidized [NADPH--hemoprotein reductase] + H2O + H(+). Its pathway is lipid metabolism; fatty acid metabolism. Inhibited by N-hydroxy-N'-(4-n-butyl-2-methylphenyl formamidine)(HET0016) with an IC(50) of 38 nM. Its function is as follows. A cytochrome P450 monooxygenase involved in fatty acid metabolism in the eye. Catalyzes the omega-hydroxylation of polyunsaturated fatty acids (PUFAs) docosahexaenoate (DHA) and its precursor eicosapentaenoate (EPA), and may contribute to the homeostasis of these retinal PUFAs. Omega hydroxylates saturated fatty acids such as laurate, myristate and palmitate, the catalytic efficiency decreasing in the following order: myristate &gt; laurate &gt; palmitate (C14&gt;C12&gt;C16). Mechanistically, uses molecular oxygen inserting one oxygen atom into a substrate, and reducing the second into a water molecule, with two electrons provided by NADPH via cytochrome P450 reductase (CPR; NADPH-ferrihemoprotein reductase). The chain is Cytochrome P450 4V2 (CYP4V2) from Pongo abelii (Sumatran orangutan).